The chain runs to 312 residues: Small ribosomal subunit biogenesis GTPase RsgA (312 aa).

The CP-type G domain occupies Gln-86–Pro-245. GTP-binding positions include Thr-135–Asp-138 and Gly-187–Ser-195. Zn(2+) is bound by residues Cys-270, Cys-275, His-277, and Cys-283.

The protein belongs to the TRAFAC class YlqF/YawG GTPase family. RsgA subfamily. Monomer. Associates with 30S ribosomal subunit, binds 16S rRNA. Zn(2+) is required as a cofactor.

It localises to the cytoplasm. Functionally, one of several proteins that assist in the late maturation steps of the functional core of the 30S ribosomal subunit. Helps release RbfA from mature subunits. May play a role in the assembly of ribosomal proteins into the subunit. Circularly permuted GTPase that catalyzes slow GTP hydrolysis, GTPase activity is stimulated by the 30S ribosomal subunit. The polypeptide is Small ribosomal subunit biogenesis GTPase RsgA (Prochlorococcus marinus (strain NATL1A)).